We begin with the raw amino-acid sequence, 452 residues long: uncharacterized protein (452 aa).

A run of 7 helical transmembrane segments spans residues P18 to K38, L81 to A101, I269 to I289, A317 to I337, V354 to F374, V390 to I410, and S428 to V448.

The protein belongs to the auxin efflux carrier (TC 2.A.69) family.

It localises to the membrane. This is an uncharacterized protein from Schizosaccharomyces pombe (strain 972 / ATCC 24843) (Fission yeast).